A 467-amino-acid polypeptide reads, in one-letter code: Glycosyl hydrolase family 109 protein (467 aa).

Positions 1–31 form a signal peptide, tat-type signal; that stretch reads MKNFNRRAFLKAAGATTAGLVTSGLILPASA. NAD(+)-binding positions include 66 to 67, Asp-88, 137 to 140, 157 to 158, and Asn-186; these read QR, WQWH, and EV. Residues Tyr-215, Arg-234, 246-249, and Tyr-328 each bind substrate; that span reads YPTH. An NAD(+)-binding site is contributed by Tyr-246.

This sequence belongs to the Gfo/Idh/MocA family. Glycosyl hydrolase 109 subfamily. Requires NAD(+) as cofactor. In terms of processing, predicted to be exported by the Tat system. The position of the signal peptide cleavage has not been experimentally proven.

Functionally, glycosidase. In Shewanella woodyi (strain ATCC 51908 / MS32), this protein is Glycosyl hydrolase family 109 protein.